The following is a 216-amino-acid chain: GTP cyclohydrolase 1 (216 aa).

3 residues coordinate Zn(2+): Cys108, His111, and Cys179.

The protein belongs to the GTP cyclohydrolase I family. In terms of assembly, toroid-shaped homodecamer, composed of two pentamers of five dimers.

It catalyses the reaction GTP + H2O = 7,8-dihydroneopterin 3'-triphosphate + formate + H(+). Its pathway is cofactor biosynthesis; 7,8-dihydroneopterin triphosphate biosynthesis; 7,8-dihydroneopterin triphosphate from GTP: step 1/1. The protein is GTP cyclohydrolase 1 of Shewanella amazonensis (strain ATCC BAA-1098 / SB2B).